The primary structure comprises 409 residues: Peptidase T (409 aa).

His-78 is a Zn(2+) binding site. Asp-80 is an active-site residue. Asp-140 is a binding site for Zn(2+). Glu-173 functions as the Proton acceptor in the catalytic mechanism. Glu-174, Asp-196, and His-379 together coordinate Zn(2+).

The protein belongs to the peptidase M20B family. Requires Zn(2+) as cofactor.

It is found in the cytoplasm. It catalyses the reaction Release of the N-terminal residue from a tripeptide.. In terms of biological role, cleaves the N-terminal amino acid of tripeptides. This is Peptidase T from Serratia proteamaculans (strain 568).